Here is a 325-residue protein sequence, read N- to C-terminus: H-2 class I histocompatibility antigen, Q10 alpha chain (325 aa).

The signal sequence occupies residues 1 to 24 (MGAMAPRTLLLLLAAALAPTQTQA). Residues 25-114 (GSHSMRYFET…LLGYYNQSES (90 aa)) form an alpha-1 region. Over 25-310 (GSHSMRYFET…PPSTDSIMSH (286 aa)) the chain is Extracellular. Asn110 is a glycosylation site (N-linked (GlcNAc...) asparagine). Residues 115 to 206 (GSHTIQWMYG…ELGKETLLRT (92 aa)) are alpha-2. Intrachain disulfides connect Cys125–Cys188 and Cys227–Cys283. Positions 207 to 298 (DPPKTHVTHH…GLPEPLTLRW (92 aa)) are alpha-3. Residues 209–297 (PKTHVTHHPG…EGLPEPLTLR (89 aa)) enclose the Ig-like C1-type domain. N-linked (GlcNAc...) asparagine glycosylation is present at Asn280. Residues 299–310 (EPPPSTDSIMSH) are connecting peptide. Residues 311-324 (IADLLWPSLKLWWY) form a helical membrane-spanning segment.

Belongs to the MHC class I family. In terms of assembly, heterodimer of an alpha chain and a beta chain (beta-2-microglobulin).

It is found in the membrane. Its function is as follows. Involved in the presentation of foreign antigens to the immune system. This is H-2 class I histocompatibility antigen, Q10 alpha chain (H2-Q10) from Mus musculus (Mouse).